The primary structure comprises 917 residues: Auxin response factor 17 (917 aa).

A DNA-binding region (TF-B3) is located at residues 134–236 (FCKTLTASDT…QLLLGIRRAN (103 aa)). Positions 571–649 (SVPNALSPFS…RPTAVPVPDP (79 aa)) are disordered. Composition is skewed to low complexity over residues 576 to 594 (LSPF…MTLQ) and 604 to 620 (SYPD…NTST). Residues 786–870 (ATFVKVYKSG…SCIKILSPQE (85 aa)) enclose the PB1 domain.

This sequence belongs to the ARF family. As to quaternary structure, homodimers and heterodimers. In terms of tissue distribution, expressed in roots, culms, leaves and young panicles.

The protein resides in the nucleus. Auxin response factors (ARFs) are transcriptional factors that bind specifically to the DNA sequence 5'-TGTCTC-3' found in the auxin-responsive promoter elements (AuxREs). This chain is Auxin response factor 17 (ARF17), found in Oryza sativa subsp. japonica (Rice).